Reading from the N-terminus, the 519-residue chain is Ribonuclease Y (519 aa).

The chain crosses the membrane as a helical span at residues 3–23; the sequence is LMIFAYIAIGAVLGAGTGYLL. One can recognise a KH domain in the interval 209–272; the sequence is TVTAVTLPSE…QVAKMALERL (64 aa). Residues 335–428 enclose the HD domain; that stretch reads VLQHSLEVSA…VQAADSISGA (94 aa).

This sequence belongs to the RNase Y family.

It localises to the cell membrane. Its function is as follows. Endoribonuclease that initiates mRNA decay. This Nitratidesulfovibrio vulgaris (strain ATCC 29579 / DSM 644 / CCUG 34227 / NCIMB 8303 / VKM B-1760 / Hildenborough) (Desulfovibrio vulgaris) protein is Ribonuclease Y.